The chain runs to 224 residues: Putative homeobox protein R749 (224 aa).

The interval K139–Q162 is disordered. A DNA-binding region (homeobox) is located at residues Q161–L220.

It is found in the host nucleus. This chain is Putative homeobox protein R749, found in Acanthamoeba polyphaga mimivirus (APMV).